A 179-amino-acid polypeptide reads, in one-letter code: Large ribosomal subunit protein uL6 (179 aa).

This sequence belongs to the universal ribosomal protein uL6 family. As to quaternary structure, part of the 50S ribosomal subunit.

In terms of biological role, this protein binds to the 23S rRNA, and is important in its secondary structure. It is located near the subunit interface in the base of the L7/L12 stalk, and near the tRNA binding site of the peptidyltransferase center. This Synechococcus elongatus (strain ATCC 33912 / PCC 7942 / FACHB-805) (Anacystis nidulans R2) protein is Large ribosomal subunit protein uL6.